Reading from the N-terminus, the 233-residue chain is Nucleoside diphosphate kinase 2, chloroplastic (233 aa).

The transit peptide at 1-67 directs the protein to the chloroplast; it reads MEAMSGLSSP…LISHSLPRKK (67 aa). Lysine 93, phenylalanine 141, arginine 169, threonine 175, arginine 186, and asparagine 196 together coordinate ATP. Histidine 199 functions as the Pros-phosphohistidine intermediate in the catalytic mechanism.

Belongs to the NDK family. The cofactor is Mg(2+).

It is found in the plastid. The protein resides in the chloroplast. The enzyme catalyses a 2'-deoxyribonucleoside 5'-diphosphate + ATP = a 2'-deoxyribonucleoside 5'-triphosphate + ADP. The catalysed reaction is a ribonucleoside 5'-diphosphate + ATP = a ribonucleoside 5'-triphosphate + ADP. Major role in the synthesis of nucleoside triphosphates other than ATP. The ATP gamma phosphate is transferred to the NDP beta phosphate via a ping-pong mechanism, using a phosphorylated active-site intermediate. The polypeptide is Nucleoside diphosphate kinase 2, chloroplastic (NDPK2) (Spinacia oleracea (Spinach)).